Consider the following 437-residue polypeptide: Eukaryotic peptide chain release factor subunit 1 (437 aa).

An NIKS motif; plays an important role in translational termination motif is present at residues 61–64 (NIKS).

It belongs to the eukaryotic release factor 1 family. In terms of assembly, component of the eRF1-eRF3-GTP ternary complex, composed of ETF1/ERF1 and eRF3 (GSPT1/ERF3A or GSPT2/ERF3B) and GTP.

The protein resides in the cytoplasm. Its function is as follows. Component of the eRF1-eRF3-GTP ternary complex, a ternary complex that mediates translation termination in response to the termination codons. The eRF1-eRF3-GTP complex binds to a stop codon in the ribosomal A-site. ETF1/ERF1 is responsible for stop codon recognition and inducing hydrolysis of peptidyl-tRNA. Following GTP hydrolysis, eRF3 (GSPT1/ERF3A or GSPT2/ERF3B) dissociates, permitting ETF1/eRF1 to accommodate fully in the A-site, followed by hydrolysis of peptidyl-tRNA. This Xenopus tropicalis (Western clawed frog) protein is Eukaryotic peptide chain release factor subunit 1 (etf1).